The following is a 297-amino-acid chain: Large ribosomal subunit protein uL15m (297 aa).

Residues 1 to 21 (MSGNGVHGVHGALQLLRSLPK) constitute a mitochondrion transit peptide. A disordered region spans residues 23-69 (SLANLRPNPGSKKPERRRGRGRYRGRKCGRGHKGERQRGNRPRLGFE). Basic residues predominate over residues 36-53 (PERRRGRGRYRGRKCGRG).

The protein belongs to the universal ribosomal protein uL15 family. In terms of assembly, component of the mitochondrial ribosome large subunit (39S) which comprises a 16S rRNA and about 50 distinct proteins.

The protein localises to the mitochondrion. The polypeptide is Large ribosomal subunit protein uL15m (MRPL15) (Gallus gallus (Chicken)).